The chain runs to 268 residues: Riboflavin transport system permease protein RibX (268 aa).

The next 6 helical transmembrane spans lie at 24-44, 76-96, 119-139, 140-160, 185-205, and 236-256; these read ALGL…GVTL, LATL…ALIL, AIPV…GLTS, KVLV…VVAI, VEAP…LALA, and LIFV…VLAG. The region spanning 75–255 is the ABC transmembrane type-1 domain; it reads TLATLSAALG…LITLTLYVLA (181 aa).

It belongs to the binding-protein-dependent transport system permease family. As to quaternary structure, the complex is likely composed of an ATP-binding protein, a transmembrane protein (RibX) and a solute-binding protein (RibY).

Its subcellular location is the cell membrane. Functionally, part of an ABC transporter complex that transports riboflavin into the cell. The polypeptide is Riboflavin transport system permease protein RibX (Chloroflexus aurantiacus (strain ATCC 29366 / DSM 635 / J-10-fl)).